The following is a 1880-amino-acid chain: Nonribosomal peptide synthetase otaB (1880 aa).

Residues 205-594 (AQAVERGNSI…SVSFVGRRQA (390 aa)) are adenylation 1. One can recognise a Carrier domain in the interval 728–804 (LPLSPLERQI…ELGAHLEQEA (77 aa)). S765 is modified (O-(pantetheine 4'-phosphoryl)serine). The segment at 840–1250 (EDVYPCTALQ…LLSPQDQQQL (411 aa)) is condensation. Residues 1269–1665 (QRQCLAHPQK…GRKDRQVKLR (397 aa)) are adenylation 2.

The protein belongs to the NRP synthetase family.

It catalyses the reaction 7-carboxymellein + L-phenylalanine + ATP = ochratoxin B + ADP + phosphate + H(+). It functions in the pathway mycotoxin biosynthesis. Functionally, nonribosomal peptide synthetase; part of the gene cluster that mediates the biosynthesis of ochratoxin A (OTA), a mycotoxin composed of a chlorinated type I polyketide dihydroisocoumarin moiety linked to L-phenylalanine, and demonstrated to have nephrotoxic, immunotoxic, genotoxic, neurotoxic, and teratogenic properties. OtaB is responsible for the linking of phenylalanine to the dihydroisocoumarin ring. The pathway begins with the highly reducing polyketide synthase otaA that catalyzes the formation of the isocoumarin group during the initial stages of biosynthesis, starting from one acetate and 4 malonate units, to originate the characteristic pentaketide skeleton 7-methylmellein (7-MM) of the OTA molecule. The newly identified cyclase otaY might be involved in the polyketide cyclization reaction during the initial steps of the OTA biosynthesis. 7-MM is then oxidized into 7-carboxymellein (also called ochratoxin beta) by the cytochrome P450 monooxygenase otaC. The NRPS encoded by the otaB gene is involved in the linking of phenylalanine to the dihydroisocoumarin ring. The reaction catalyzed by NRPS results in the production of ochratoxin B (OTB), which is the non-chlorinated analog of OTA and which subsequently serves as the substrate of the halogenase otaD for chlorination activity to form the final molecular structure of OTA, containing a chlorine atom in the C-5 position of the molecule. The protein is Nonribosomal peptide synthetase otaB of Aspergillus niger (strain ATCC MYA-4892 / CBS 513.88 / FGSC A1513).